The chain runs to 167 residues: SsrA-binding protein (167 aa).

Residues 139–158 (QNHDKRDAAKDRDWQRDKQR) are compositionally biased toward basic and acidic residues. A disordered region spans residues 139-167 (QNHDKRDAAKDRDWQRDKQRVMRRHNRDA).

It belongs to the SmpB family.

The protein localises to the cytoplasm. Required for rescue of stalled ribosomes mediated by trans-translation. Binds to transfer-messenger RNA (tmRNA), required for stable association of tmRNA with ribosomes. tmRNA and SmpB together mimic tRNA shape, replacing the anticodon stem-loop with SmpB. tmRNA is encoded by the ssrA gene; the 2 termini fold to resemble tRNA(Ala) and it encodes a 'tag peptide', a short internal open reading frame. During trans-translation Ala-aminoacylated tmRNA acts like a tRNA, entering the A-site of stalled ribosomes, displacing the stalled mRNA. The ribosome then switches to translate the ORF on the tmRNA; the nascent peptide is terminated with the 'tag peptide' encoded by the tmRNA and targeted for degradation. The ribosome is freed to recommence translation, which seems to be the essential function of trans-translation. This is SsrA-binding protein from Xanthomonas euvesicatoria pv. vesicatoria (strain 85-10) (Xanthomonas campestris pv. vesicatoria).